The sequence spans 240 residues: tRNA1(Val) (adenine(37)-N6)-methyltransferase (240 aa).

It belongs to the methyltransferase superfamily. tRNA (adenine-N(6)-)-methyltransferase family.

It is found in the cytoplasm. It catalyses the reaction adenosine(37) in tRNA1(Val) + S-adenosyl-L-methionine = N(6)-methyladenosine(37) in tRNA1(Val) + S-adenosyl-L-homocysteine + H(+). Its function is as follows. Specifically methylates the adenine in position 37 of tRNA(1)(Val) (anticodon cmo5UAC). In Photobacterium profundum (strain SS9), this protein is tRNA1(Val) (adenine(37)-N6)-methyltransferase.